A 449-amino-acid polypeptide reads, in one-letter code: uncharacterized protein (449 aa).

A TRAM domain is found at 3–61 (VWQQGATIELRIDSLSHTGEGVGRWQDRVVFVADTVPGDRLRVRLTHVKRQYAHGKVLE). Cys-74, Cys-80, Cys-83, and Cys-161 together coordinate [4Fe-4S] cluster. The S-adenosyl-L-methionine site is built by Gln-283, Tyr-312, Glu-333, and Asp-378. The active-site Nucleophile is Cys-405.

This sequence belongs to the class I-like SAM-binding methyltransferase superfamily. RNA M5U methyltransferase family.

This is an uncharacterized protein from Thermosynechococcus vestitus (strain NIES-2133 / IAM M-273 / BP-1).